We begin with the raw amino-acid sequence, 802 residues long: Neuronal PAS domain-containing protein 4 (802 aa).

The tract at residues 1–13 (MYRSTKGASKARR) is basic motif; degenerate. Residues 1 to 53 (MYRSTKGASKARRDQINAEIRNLKELLPLAEADKVRLSYLHIMSLACIYTRKG) form the bHLH domain. Residues 5 to 38 (TKGASKARRDQINAEIRNLKELLPLAEADKVRLS) are a coiled coil. Residues 14-53 (DQINAEIRNLKELLPLAEADKVRLSYLHIMSLACIYTRKG) are helix-loop-helix motif. 2 PAS domains span residues 70-144 (SAQE…LDAD) and 203-275 (PGPG…LAEN). The PAC domain maps to 280 to 319 (AEMVVRLQAKHGGWTWIYCMLYSDGPEGPITANNYPISDT). Composition is skewed to polar residues over residues 472–495 (PSSATFPDPLTSSLQGQLTESSAR), 502–518 (TPCTSTFPDQLLPSTAT), and 527–555 (THEQLTPPSTAFQAHLNSPSQTFPEQLSP). The tract at residues 472 to 555 (PSSATFPDPL…SQTFPEQLSP (84 aa)) is disordered. Residues 624-648 (YTEKEQNEIDRLIQQISQLAQGMDR) adopt a coiled-coil conformation.

As to quaternary structure, efficient DNA binding requires dimerization with another bHLH protein. Heterodimer; forms a heterodimer with ARNT, ARNT2 or BMAL1. Ubiquitinated, leading to degradation by the proteosome. As to expression, specifically expressed in neurons. Expressed in the lateral nucleus of the amygdala (at protein level).

It localises to the nucleus. Functionally, transcription factor expressed in neurons of the brain that regulates the excitatory-inhibitory balance within neural circuits and is required for contextual memory in the hippocampus. Plays a key role in the structural and functional plasticity of neurons. Acts as an early-response transcription factor in both excitatory and inhibitory neurons, where it induces distinct but overlapping sets of late-response genes in these two types of neurons, allowing the synapses that form on inhibitory and excitatory neurons to be modified by neuronal activity in a manner specific to their function within a circuit, thereby facilitating appropriate circuit responses to sensory experience. In excitatory neurons, activates transcription of BDNF, which in turn controls the number of GABA-releasing synapses that form on excitatory neurons, thereby promoting an increased number of inhibitory synapses on excitatory neurons. In inhibitory neurons, regulates a distinct set of target genes that serve to increase excitatory input onto somatostatin neurons, probably resulting in enhanced feedback inhibition within cortical circuits. The excitatory and inhibitory balance in neurons affects a number of processes, such as short-term and long-term memory, acquisition of experience, fear memory, response to stress and social behavior. Acts as a regulator of dendritic spine development in olfactory bulb granule cells in a sensory-experience-dependent manner by regulating expression of MDM2. Efficient DNA binding requires dimerization with another bHLH protein, such as ARNT, ARNT2 or BMAL1. Can activate the CME (CNS midline enhancer) element. This Rattus norvegicus (Rat) protein is Neuronal PAS domain-containing protein 4.